The following is a 295-amino-acid chain: Proline-rich proteoglycan 2 (295 aa).

The N-terminal stretch at 1–16 is a signal peptide; sequence MLVVLLTAALLVLSSA. A disordered region spans residues 16–295; sequence AQGVDEEVVY…QSSFLWSFSA (280 aa). Positions 26 to 41 are enriched in low complexity; the sequence is EDSSQQLELEQQSQGH. Over residues 48–58 the composition is skewed to pro residues; it reads PPPGGLPPRPP. Residues 62–78 show a composition bias toward acidic residues; sequence ENGDGDDNDDGDDDGSG. Composition is skewed to pro residues over residues 100–187 and 194–278; these read PPPA…PPGG and QGPP…PQGP.

In terms of processing, contains glycosaminoglycans of chondroitin-sulfate and heparan types.

The protein localises to the secreted. The chain is Proline-rich proteoglycan 2 (Prpg2) from Rattus norvegicus (Rat).